The following is a 410-amino-acid chain: Arginine biosynthesis bifunctional protein ArgJ (410 aa).

Positions 158, 184, 195, 282, 405, and 410 each coordinate substrate. Catalysis depends on Thr-195, which acts as the Nucleophile.

The protein belongs to the ArgJ family. In terms of assembly, heterotetramer of two alpha and two beta chains.

The protein resides in the cytoplasm. It carries out the reaction N(2)-acetyl-L-ornithine + L-glutamate = N-acetyl-L-glutamate + L-ornithine. It catalyses the reaction L-glutamate + acetyl-CoA = N-acetyl-L-glutamate + CoA + H(+). Its pathway is amino-acid biosynthesis; L-arginine biosynthesis; L-ornithine and N-acetyl-L-glutamate from L-glutamate and N(2)-acetyl-L-ornithine (cyclic): step 1/1. It functions in the pathway amino-acid biosynthesis; L-arginine biosynthesis; N(2)-acetyl-L-ornithine from L-glutamate: step 1/4. Its function is as follows. Catalyzes two activities which are involved in the cyclic version of arginine biosynthesis: the synthesis of N-acetylglutamate from glutamate and acetyl-CoA as the acetyl donor, and of ornithine by transacetylation between N(2)-acetylornithine and glutamate. In Rhodopirellula baltica (strain DSM 10527 / NCIMB 13988 / SH1), this protein is Arginine biosynthesis bifunctional protein ArgJ.